The primary structure comprises 286 residues: Protease HtpX (286 aa).

2 helical membrane passes run 4–24 (ILLF…ILSL) and 33–53 (TGLL…SLFL). H139 is a Zn(2+) binding site. The active site involves E140. H143 is a binding site for Zn(2+). 2 helical membrane-spanning segments follow: residues 147 to 167 (GDMV…IFVS) and 186 to 206 (IYFL…SMIA). E214 serves as a coordination point for Zn(2+).

Belongs to the peptidase M48B family. Zn(2+) serves as cofactor.

The protein resides in the cell inner membrane. In Pasteurella multocida (strain Pm70), this protein is Protease HtpX.